Consider the following 351-residue polypeptide: Ferredoxin--NADP reductase (351 aa).

FAD contacts are provided by threonine 14, aspartate 33, glutamine 41, tyrosine 46, alanine 86, phenylalanine 121, aspartate 287, and threonine 328.

This sequence belongs to the ferredoxin--NADP reductase type 2 family. As to quaternary structure, homodimer. Requires FAD as cofactor.

It carries out the reaction 2 reduced [2Fe-2S]-[ferredoxin] + NADP(+) + H(+) = 2 oxidized [2Fe-2S]-[ferredoxin] + NADPH. The chain is Ferredoxin--NADP reductase from Flavobacterium psychrophilum (strain ATCC 49511 / DSM 21280 / CIP 103535 / JIP02/86).